We begin with the raw amino-acid sequence, 4083 residues long: Dynein axonemal heavy chain 3 (4083 aa).

2 disordered regions span residues M1–N37 and D111–K132. The stem stretch occupies residues M1 to L1357. Coiled-coil stretches lie at residues I1026–K1052 and R1108–K1133. AAA regions lie at residues Y1358–A1579, E1639–K1870, T2003–G2251, and E2362–H2613. ATP contacts are provided by residues G1396 to T1403, G1677 to T1684, G2041 to S2048, and G2401 to Q2408. The interval F2628–C2927 is stalk. Positions Q2651–A2714 form a coiled coil. AAA stretches follow at residues L3012 to E3242 and I3455 to M3679.

This sequence belongs to the dynein heavy chain family. As to quaternary structure, consists of at least two heavy chains and a number of intermediate and light chains.

It is found in the cytoplasm. Its subcellular location is the cytoskeleton. The protein localises to the cilium axoneme. Functionally, force generating protein of respiratory cilia. Produces force towards the minus ends of microtubules. Dynein has ATPase activity; the force-producing power stroke is thought to occur on release of ADP. Involved in sperm motility; implicated in sperm flagellar assembly. This is Dynein axonemal heavy chain 3 (Dnah3) from Mus musculus (Mouse).